We begin with the raw amino-acid sequence, 141 residues long: Hemoglobin subunit alpha (141 aa).

Positions 1 to 141 (VLSPADKKNV…VSTVLTSKYR (141 aa)) constitute a Globin domain. Residue Ser3 is modified to Phosphoserine. Residues Lys7 and Lys11 each carry the N6-succinyllysine modification. Position 16 is an N6-acetyllysine; alternate (Lys16). The residue at position 16 (Lys16) is an N6-succinyllysine; alternate. At Tyr24 the chain carries Phosphotyrosine. Ser35 is subject to Phosphoserine. Residue Lys40 is modified to N6-succinyllysine. A Phosphoserine modification is found at Ser49. His58 provides a ligand contact to O2. His87 contributes to the heme b binding site. Position 102 is a phosphoserine (Ser102). Phosphothreonine is present on Thr108. Ser124 and Ser131 each carry phosphoserine. Phosphothreonine is present on residues Thr134 and Thr137. Ser138 carries the post-translational modification Phosphoserine.

It belongs to the globin family. Heterotetramer of two alpha chains and two beta chains. As to expression, red blood cells.

Functionally, involved in oxygen transport from the lung to the various peripheral tissues. Hemopressin acts as an antagonist peptide of the cannabinoid receptor CNR1. Hemopressin-binding efficiently blocks cannabinoid receptor CNR1 and subsequent signaling. This Spermophilus citellus (European ground squirrel) protein is Hemoglobin subunit alpha (HBA).